Here is a 181-residue protein sequence, read N- to C-terminus: Probable inosine/xanthosine triphosphatase (181 aa).

Asp65 contacts Mg(2+).

This sequence belongs to the YjjX NTPase family. In terms of assembly, homodimer. Mg(2+) is required as a cofactor. Mn(2+) serves as cofactor.

The enzyme catalyses XTP + H2O = XDP + phosphate + H(+). It carries out the reaction ITP + H2O = IDP + phosphate + H(+). Phosphatase that hydrolyzes non-canonical purine nucleotides such as XTP and ITP to their respective diphosphate derivatives. Probably excludes non-canonical purines from DNA/RNA precursor pool, thus preventing their incorporation into DNA/RNA and avoiding chromosomal lesions. The polypeptide is Probable inosine/xanthosine triphosphatase (Caldivirga maquilingensis (strain ATCC 700844 / DSM 13496 / JCM 10307 / IC-167)).